The sequence spans 482 residues: Dihydrolipoyllysine-residue acetyltransferase component of pyruvate dehydrogenase complex, mitochondrial (482 aa).

Residues 1–28 (MSAFVRVVPRISRSSVLTRSLRLQLRCY) constitute a mitochondrion transit peptide. The region spanning 34-110 (HTIIGMPALS…PVNKPIAVYV (77 aa)) is the Lipoyl-binding domain. The residue at position 75 (K75) is an N6-lipoyllysine. The tract at residues 122 to 170 (FKLEDSGSDSKTSTKAQPAEPQAEKKQEAPAEETKTSAPEAKKSDVAAP) is disordered. Over residues 143-166 (QAEKKQEAPAEETKTSAPEAKKSD) the composition is skewed to basic and acidic residues. The region spanning 175 to 212 (FASPLAKTIALEKGISLKDVHGTGPRGRITKADIESYL) is the Peripheral subunit-binding (PSBD) domain. Positions 214–251 (KSSKQSSQTSGAAAATPAAATSSTTAGSAPSPSSTASY) are disordered. The span at 217–250 (KQSSQTSGAAAATPAAATSSTTAGSAPSPSSTAS) shows a compositional bias: low complexity. Active-site residues include H455 and D459.

The protein belongs to the 2-oxoacid dehydrogenase family. In terms of assembly, eukaryotic pyruvate dehydrogenase (PDH) complexes are organized as a core consisting of the oligomeric dihydrolipoamide acetyl-transferase (E2), around which are arranged multiple copies of pyruvate dehydrogenase (E1), dihydrolipoamide dehydrogenase (E3) and protein X (E3BP) bound by non-covalent bonds. (R)-lipoate serves as cofactor.

The protein localises to the mitochondrion matrix. It carries out the reaction N(6)-[(R)-dihydrolipoyl]-L-lysyl-[protein] + acetyl-CoA = N(6)-[(R)-S(8)-acetyldihydrolipoyl]-L-lysyl-[protein] + CoA. In terms of biological role, the pyruvate dehydrogenase complex catalyzes the overall conversion of pyruvate to acetyl-CoA and CO(2). This chain is Dihydrolipoyllysine-residue acetyltransferase component of pyruvate dehydrogenase complex, mitochondrial (LAT1), found in Saccharomyces cerevisiae (strain ATCC 204508 / S288c) (Baker's yeast).